A 557-amino-acid polypeptide reads, in one-letter code: MVLSDIEIANSVTMEPISKVANQLGIDEEALCLYGKYKAKIDARQLVALKDKPDGKLILVTAISPTPAGEGKTTTSVGLVDALSAIGKKAVIALREPSLGPVFGVKGGAAGGGHAQVVPMEDINLHFTGDFHAIGVANNLLAALIDNHIHHGNSLGIDSRRITWKRVVDMNDRQLRHIVDGLQGKVNGAPREDGYDITVASEIMAILCLSENISDLKARLEKIIIGYNYRGEPVTAKDLKAGGALAALLKDAIHPNLVQTLEHTPALIHGGPFANIAHGCNSVLATKLALKYGDYAVTEAGFGADLGAEKFIDIKCRMSGLRPAAVVLVATIRALKMHGGVPKADLATENVQAVVDGLPNLDKHLANIQDVYGLPVVVAINKFPLDTDAELQAVYDACDKRGVDVVISDVWANGGAGARELAEKVVTLAEQDNQFRFVYEEDDSIETKLTKIVTKVYGGKGITLSPAAKRELADLERLGFGNYPICMAKTQYSFSDDAKKLGAPTDFTVTISNLKVSAGAGFIVALTGAIMTMPGLPKVPASETIDIDEEGNITGLF.

Residue 66-73 (TPAGEGKT) coordinates ATP.

This sequence belongs to the formate--tetrahydrofolate ligase family.

It carries out the reaction (6S)-5,6,7,8-tetrahydrofolate + formate + ATP = (6R)-10-formyltetrahydrofolate + ADP + phosphate. It functions in the pathway one-carbon metabolism; tetrahydrofolate interconversion. In Streptococcus pyogenes serotype M3 (strain ATCC BAA-595 / MGAS315), this protein is Formate--tetrahydrofolate ligase 2.